A 456-amino-acid polypeptide reads, in one-letter code: RuvB-like helicase 1 (456 aa).

An ATP-binding site is contributed by 70–77 (GPPGTGKT).

The protein belongs to the RuvB family. Forms homohexameric rings. May form a dodecamer with rept made of two stacked hexameric rings. Component of the chromatin remodeling Ino80 complex. Interacts with Myc and rept. In terms of tissue distribution, higher expression occurs in primordia of mesoderm, anterior and posterior midgut and cephalic furrow early in gastrulation, as well as in endoderm and mesoderm lineages during germ band extension. Later in development expression is only maintained in endoderm cells. Expressed in thoracic and abdominal segment neural precursors of all embryonic chordotonal organs.

The protein resides in the nucleus. The catalysed reaction is ATP + H2O = ADP + phosphate + H(+). In terms of biological role, acts as a transcriptional coactivator in Wg signaling caused by altered arm signaling. Pont and rept interfere antagonistically with nuclear arm signaling function, and are required to enhance or reduce arm activity, respectively. Also an essential cofactor for the normal function of Myc; required for cellular proliferation and growth. Functionally, proposed core component of the chromatin remodeling Ino80 complex which is involved in transcriptional regulation, DNA replication and probably DNA repair. In Drosophila melanogaster (Fruit fly), this protein is RuvB-like helicase 1.